The chain runs to 178 residues: Large ribosomal subunit protein uL6 (178 aa).

This sequence belongs to the universal ribosomal protein uL6 family. In terms of assembly, part of the 50S ribosomal subunit.

In terms of biological role, this protein binds to the 23S rRNA, and is important in its secondary structure. It is located near the subunit interface in the base of the L7/L12 stalk, and near the tRNA binding site of the peptidyltransferase center. This Helicobacter pylori (strain G27) protein is Large ribosomal subunit protein uL6.